Reading from the N-terminus, the 312-residue chain is 4-diphosphocytidyl-2-C-methyl-D-erythritol kinase (312 aa).

Lysine 10 is an active-site residue. An ATP-binding site is contributed by 105-115; the sequence is PVAGGMAGGSA. Aspartate 146 is a catalytic residue.

This sequence belongs to the GHMP kinase family. IspE subfamily.

The catalysed reaction is 4-CDP-2-C-methyl-D-erythritol + ATP = 4-CDP-2-C-methyl-D-erythritol 2-phosphate + ADP + H(+). It participates in isoprenoid biosynthesis; isopentenyl diphosphate biosynthesis via DXP pathway; isopentenyl diphosphate from 1-deoxy-D-xylulose 5-phosphate: step 3/6. Its function is as follows. Catalyzes the phosphorylation of the position 2 hydroxy group of 4-diphosphocytidyl-2C-methyl-D-erythritol. In Corynebacterium glutamicum (strain R), this protein is 4-diphosphocytidyl-2-C-methyl-D-erythritol kinase.